A 496-amino-acid polypeptide reads, in one-letter code: Cytochrome P450 monooxygenase claT (496 aa).

The chain crosses the membrane as a helical span at residues 2-22 (LSLIVEATLLLVVLVLSAHYV). Cys-423 serves as a coordination point for heme.

Belongs to the cytochrome P450 family. Heme serves as cofactor.

It is found in the membrane. It catalyses the reaction wigandol + 4 reduced [NADPH--hemoprotein reductase] + 4 O2 = arnebinol A + 4 oxidized [NADPH--hemoprotein reductase] + 6 H2O + 4 H(+). The enzyme catalyses arnebinol A + reduced [NADPH--hemoprotein reductase] + O2 = clavilactone A + oxidized [NADPH--hemoprotein reductase] + H2O + H(+). The catalysed reaction is (2E)-geranylhydroquinone + reduced [NADPH--hemoprotein reductase] + O2 = isoalliodorol + oxidized [NADPH--hemoprotein reductase] + H2O + H(+). It functions in the pathway secondary metabolite biosynthesis; terpenoid biosynthesis. Functionally, cytochrome P450 monooxygenase; part of the gene cluster that mediates the biosynthesis of clavilactone A, a meroterpenoid that features a unique benzo-fused ten-membered carbocyclic ring unit with an alpha,beta-epoxy-gamma-lactone moiety, forming an intriguing 10/5/3 tricyclic nested skeleton. ClaR, ClaS and ClaT are sufficient to produce clavilactone A. Within the pathway, claT acts as a multifunctional cytochrome P450 monooxygenase that catalyzes a ten-electron oxidation to accomplish the biosynthesis of the 10/5/3 tricyclic nested skeleton in clavilactones. The biosynthesis begins with the prenyltransferase claS that transfers geranyl pyrophosphate (GPP) to hydroquinone to produces geranylhydroquinone. The cytochrome P450 monooxygenase claR then catalyzes the diradical coupling reaction between the intramolecular hydroquinone and allyl moieties to form the benzo-fused ten-membered carbocyclic ring unit of wigantol. Finally the cytochrome P450 monooxygenase claT exquisitely and stereoselectively assembles the alpha,beta-epoxy-gamma-lactone moiety, producing clavilactone A via arnebinol A. The chain is Cytochrome P450 monooxygenase claT from Ampulloclitocybe clavipes (Club foot).